Consider the following 757-residue polypeptide: Dynamin-related protein DNM1 (757 aa).

Residues 25–333 (TLDLPILAVV…LLSHIRDKLP (309 aa)) enclose the Dynamin-type G domain. The G1 motif stretch occupies residues 35 to 42 (GSQSSGKS). GTP is bound at residue 35 to 42 (GSQSSGKS). The tract at residues 61-63 (VTR) is G2 motif. Residues 175 to 178 (DLPG) form a G3 motif region. GTP contacts are provided by residues 175–179 (DLPGI) and 244–247 (TKLD). The G4 motif stretch occupies residues 244–247 (TKLD). The G5 motif stretch occupies residues 274 to 277 (VNRS). The tract at residues 557-597 (SKLSQQENGQTNGINGTSSISSNIDQDSAKNSDYDDDGIDA) is disordered. Positions 567–580 (TNGINGTSSISSNI) are enriched in low complexity. At Ser629 the chain carries Phosphoserine. Residues 670–757 (CELIKRLIVS…KAATLISNIL (88 aa)) form the GED domain.

Belongs to the TRAFAC class dynamin-like GTPase superfamily. Dynamin/Fzo/YdjA family. In terms of assembly, interacts with FIS1 and MDV1.

The protein resides in the mitochondrion outer membrane. It catalyses the reaction GTP + H2O = GDP + phosphate + H(+). Microtubule-associated force-producing protein that participates mitochondrial fission. Fission of mitochondria occurs in many cell types and constitutes an important step in mitochondria morphology, which is balanced between fusion and fission. Functions antagonistically with FZO1. This is Dynamin-related protein DNM1 (DNM1) from Saccharomyces cerevisiae (strain ATCC 204508 / S288c) (Baker's yeast).